We begin with the raw amino-acid sequence, 341 residues long: Phosphoribosylaminoimidazole-succinocarboxamide synthase, chloroplastic (341 aa).

It belongs to the SAICAR synthetase family.

The protein localises to the plastid. Its subcellular location is the chloroplast. The enzyme catalyses 5-amino-1-(5-phospho-D-ribosyl)imidazole-4-carboxylate + L-aspartate + ATP = (2S)-2-[5-amino-1-(5-phospho-beta-D-ribosyl)imidazole-4-carboxamido]succinate + ADP + phosphate + 2 H(+). It participates in purine metabolism; IMP biosynthesis via de novo pathway; 5-amino-1-(5-phospho-D-ribosyl)imidazole-4-carboxamide from 5-amino-1-(5-phospho-D-ribosyl)imidazole-4-carboxylate: step 1/2. The sequence is that of Phosphoribosylaminoimidazole-succinocarboxamide synthase, chloroplastic (PUR7) from Vigna aconitifolia (Moth bean).